Reading from the N-terminus, the 635-residue chain is Surface protein F (635 aa).

A signal peptide spans 1-37 (MAKYRGKPFQLYVKLSCSTMMATSIILTNILPYDAQA). Composition is skewed to basic and acidic residues over residues 101–112 (NELDSKDNKSSH) and 193–202 (KSKDASKDTS). 2 disordered regions span residues 101-122 (NELD…SDID) and 192-228 (HKSK…SGHV). Positions 597–601 (LPKAG) match the LPXTG sorting signal motif. Residue A600 is modified to Pentaglycyl murein peptidoglycan amidated alanine. Residues 601 to 635 (GETIKEHWLPISVIVGAMGVLMIWLSRRNKLKNKA) constitute a propeptide, removed by sortase.

Its subcellular location is the secreted. It is found in the cell wall. The protein is Surface protein F of Staphylococcus aureus (strain NCTC 8325 / PS 47).